Consider the following 2406-residue polypeptide: Highly reducing polyketide synthase dmxL2 (2406 aa).

One can recognise a Ketosynthase family 3 (KS3) domain in the interval 1 to 399 (MEAFWSASKK…GTNAHAVLDD (399 aa)). The active site involves cysteine 130. Cysteine 130 serves as the catalytic For beta-ketoacyl synthase activity. Positions 414–476 (GHASNGTNGT…GPTDGPTSRP (63 aa)) are disordered. A compositionally biased stretch (polar residues) spans 417 to 448 (SNGTNGTLTNGHILNGEHTSNGMNGTLTNGHA). The malonyl-CoA:ACP transacylase (MAT) domain stretch occupies residues 574-911 (FVFTGQGAQW…LAGSLFTQGY (338 aa)). The active-site For malonyltransferase activity is serine 665. The N-terminal hotdog fold stretch occupies residues 962-1096 (PSLLGSPSPS…GLLVIEYEAA (135 aa)). The PKS/mFAS DH domain maps to 962–1278 (PSLLGSPSPS…CAEIAGASSN (317 aa)). The segment at 964–1273 (LLGSPSPSLA…IEGFLCAEIA (310 aa)) is dehydratase (DH) domain. The Proton acceptor; for dehydratase activity role is filled by histidine 994. A C-terminal hotdog fold region spans residues 1124 to 1278 (VHRLDPSGFY…CAEIAGASSN (155 aa)). The Proton donor; for dehydratase activity role is filled by aspartate 1189. Residues 1694–2006 (GMLGSVCLEP…TGKHLGKIAL (313 aa)) are enoylreductase (ER) domain. The segment at 2032–2210 (GVYLLVGGLG…TTVDLGIMRD (179 aa)) is ketoreductase (KR) domain. Residues 2318–2395 (EASDSVLEAL…TFCNRIAAKS (78 aa)) enclose the Carrier domain. Residue serine 2355 is modified to O-(pantetheine 4'-phosphoryl)serine.

It functions in the pathway secondary metabolite biosynthesis. In terms of biological role, highly reducing polyketide synthase; part of the gene cluster that mediates the biosynthesis of the dimeric xanthones cryptosporioptides. The pathway begins with the synthesis of atrochrysone thioester by the polyketide synthase dmx-nrPKS. The atrochrysone carboxyl ACP thioesterase dmxR1 then breaks the thioester bond and releases the atrochrysone carboxylic acid from dmx-nrPKS. Atrochrysone carboxylic acid is decarboxylated by the decarboxylase dmxR15, and oxidized by the anthrone oxygenase dmxR16 to yield emodin. Emodin is then reduced to emodin hydroquinone by the oxidoreductase dmxR7. A-ring reduction by the short chain dehydrogenase dmxR18, dehydration by the scytalone dehydratase-like protein dmxR17 and probable spontaneous re-oxidation, results in overall deoxygenation to chrysophanol. Baeyer-Villiger oxidation by the Baeyer-Villiger monooxygenase (BVMO) dmxR6 then yields monodictylactone in equilibrium with monodictyphenone. In the case of the cryptosporioptides biosynthesis, monodictylactone is reduced at C-12 to an alcohol (by the short chain dehydrogenases dmxR12 or dmxR8) and hydroxylated at C-5 by dmxR9, yielding the electron-rich aromatic which could eliminate H(2)O to form the ortho-quinonemethide, followed by tautomerisation to paraquinone and complete the formal reduction to produce the 10-methylgroup. Conjugate addition of C-4a-OH to the resulting paraquinone by the monooxygenase dmxR10 then gives cyclohexadienone, which is then reduced at C-5 by the short chain dehydrogenase dmxR3 to give the dihydroxanthone. The 6,7-epoxide in the cryptosporioptides could be introduced by the cytochrome P450 monooxygenase dmxL3. The highly reducing PKS dmxL2 manufactures butyrate, which is further carboxylated by dmxL1 to form ethylmalonate. It is not yet clear whether the carboxylation occurs while the butyrate is attached to the ACP of dmxL2, but this unusual fungal metabolite could then be esterified to O-5 by the O-acetyltransferase dmxR13. Finally, dimerization performed by dmxR5 gives the observed dimers cryptosporioptides A, B and C as the final products of the pathway. The chain is Highly reducing polyketide synthase dmxL2 from Cryptosporiopsis sp. (strain 8999).